The chain runs to 338 residues: Cinnamoyl-CoA reductase 1 (338 aa).

NADP(+)-binding positions include 22–28 (GAGGFIG), Arg-47, Lys-53, 73–74 (DV), 93–95 (VAS), Tyr-165, Lys-169, 192–195 (PSMT), and Ser-207. Cys-158 and Cys-166 are joined by a disulfide. Lys-169 acts as the Proton donor in catalysis.

It belongs to the NAD(P)-dependent epimerase/dehydratase family. Dihydroflavonol-4-reductase subfamily. As to quaternary structure, interacts with RAC1 in a GTP-dependent manner.

Its subcellular location is the cytoplasm. It carries out the reaction (E)-cinnamaldehyde + NADP(+) + CoA = (E)-cinnamoyl-CoA + NADPH + H(+). Its pathway is aromatic compound metabolism; phenylpropanoid biosynthesis. With respect to regulation, activated by the small GTPase RAC1. Involved in the latter stages of lignin biosynthesis. Catalyzes one of the last steps of monolignol biosynthesis, the conversion of cinnamoyl-CoAs into their corresponding cinnamaldehydes. Probably involved in the formation of lignin in defense responses. The chain is Cinnamoyl-CoA reductase 1 from Oryza sativa subsp. japonica (Rice).